A 59-amino-acid polypeptide reads, in one-letter code: Large ribosomal subunit protein bL32 (59 aa).

The span at 1–15 shows a compositional bias: basic residues; it reads MAVPKRKTSKSKRDM. Residues 1-21 form a disordered region; the sequence is MAVPKRKTSKSKRDMRRASNS.

The protein belongs to the bacterial ribosomal protein bL32 family.

The protein is Large ribosomal subunit protein bL32 of Alkaliphilus metalliredigens (strain QYMF).